A 414-amino-acid chain; its full sequence is Glutamyl-tRNA reductase (414 aa).

Residues 49–52, S108, 113–115, and Q119 each bind substrate; these read TCNR and EPQ. The active-site Nucleophile is the C50. Residue 188 to 193 participates in NADP(+) binding; sequence GAGQTG.

It belongs to the glutamyl-tRNA reductase family. In terms of assembly, homodimer.

The catalysed reaction is (S)-4-amino-5-oxopentanoate + tRNA(Glu) + NADP(+) = L-glutamyl-tRNA(Glu) + NADPH + H(+). It participates in porphyrin-containing compound metabolism; protoporphyrin-IX biosynthesis; 5-aminolevulinate from L-glutamyl-tRNA(Glu): step 1/2. In terms of biological role, catalyzes the NADPH-dependent reduction of glutamyl-tRNA(Glu) to glutamate 1-semialdehyde (GSA). The chain is Glutamyl-tRNA reductase from Francisella tularensis subsp. novicida (strain U112).